We begin with the raw amino-acid sequence, 596 residues long: Elongation factor 4 (596 aa).

In terms of domain architecture, tr-type G spans 2-184 (KHIRNFSIIA…VIVAKIPPPE (183 aa)). GTP-binding positions include 14 to 19 (DHGKST) and 131 to 134 (NKID).

This sequence belongs to the TRAFAC class translation factor GTPase superfamily. Classic translation factor GTPase family. LepA subfamily.

Its subcellular location is the cell inner membrane. The catalysed reaction is GTP + H2O = GDP + phosphate + H(+). Its function is as follows. Required for accurate and efficient protein synthesis under certain stress conditions. May act as a fidelity factor of the translation reaction, by catalyzing a one-codon backward translocation of tRNAs on improperly translocated ribosomes. Back-translocation proceeds from a post-translocation (POST) complex to a pre-translocation (PRE) complex, thus giving elongation factor G a second chance to translocate the tRNAs correctly. Binds to ribosomes in a GTP-dependent manner. The protein is Elongation factor 4 of Shewanella putrefaciens (strain CN-32 / ATCC BAA-453).